A 73-amino-acid chain; its full sequence is Putative antimicrobial peptide clone 4 (73 aa).

Residues 1–22 form the signal peptide; that stretch reads MQMKYLIPIFFLVLIVADHCHA. Positions 45-73 are excised as a propeptide; that stretch reads DITSQIEQYRNLQKREAELEDILANLPVY.

Belongs to the non-disulfide-bridged peptide (NDBP) superfamily. Short antimicrobial peptide (group 4) family. In terms of tissue distribution, expressed by the venom gland.

The protein resides in the secreted. In terms of biological role, antimicrobial peptide. Has a high antibacterial activity against the Gram-positive bacterium S.aureus (MIC=5-17.30 uM), the methicillin-resistant S.aureus (MRSA) (MIC=17.30 uM), and E.faecalis (MIC=69.23 uM). Has antifungal activity against Candida spp. and one Cryptococcus neoformans strains with MICs values ranging from 6.25 to 100 uM. Also shows an inhibitory activity on C.albicans biofilms at high concentrations. Has a moderate hemolytic potency (18% at 20 uM). Also inhibits the growth of the five cancer cell lines tested. In the model of polymicrobial sepsis, it exhibits an antibiotic effect, reducing the levels of microorganisms in the infectious focus and the inflammatory responses in the lung and cecum of septic animals. The sequence is that of Putative antimicrobial peptide clone 4 from Tityus costatus (Brazilian scorpion).